The following is a 750-amino-acid chain: Polyribonucleotide nucleotidyltransferase (750 aa).

D523 and D529 together coordinate Mg(2+). A KH domain is found at 589-648 (PRVTSISIPVDKIGEVIGPKGKMINSITEETGAEITIEDDGTIYVGAADGPSAEAAIDKI). Residues 660–729 (GERFLGTVVK…SRGKISLVVV (70 aa)) enclose the S1 motif domain.

The protein belongs to the polyribonucleotide nucleotidyltransferase family. The cofactor is Mg(2+).

The protein resides in the cytoplasm. The enzyme catalyses RNA(n+1) + phosphate = RNA(n) + a ribonucleoside 5'-diphosphate. Functionally, involved in mRNA degradation. Catalyzes the phosphorolysis of single-stranded polyribonucleotides processively in the 3'- to 5'-direction. This Saccharopolyspora erythraea (strain ATCC 11635 / DSM 40517 / JCM 4748 / NBRC 13426 / NCIMB 8594 / NRRL 2338) protein is Polyribonucleotide nucleotidyltransferase.